Here is a 104-residue protein sequence, read N- to C-terminus: Iron-sulfur cluster assembly protein CyaY (104 aa).

It belongs to the frataxin family.

Involved in iron-sulfur (Fe-S) cluster assembly. May act as a regulator of Fe-S biogenesis. In Rickettsia prowazekii (strain Madrid E), this protein is Iron-sulfur cluster assembly protein CyaY.